The sequence spans 103 residues: MAAVSLTVSTVKPLGDRIFIKVSASEEKTAGGILLPDSAKEKPQVGEVAQVGPGKLNDDGSRQTPEVSIGDKVLYSKYAGTDIKLGGDEYVLLSEKDILAVVS.

This sequence belongs to the GroES chaperonin family. Heptamer of 7 subunits arranged in a ring. Interacts with the chaperonin GroEL.

Its subcellular location is the cytoplasm. Together with the chaperonin GroEL, plays an essential role in assisting protein folding. The GroEL-GroES system forms a nano-cage that allows encapsulation of the non-native substrate proteins and provides a physical environment optimized to promote and accelerate protein folding. GroES binds to the apical surface of the GroEL ring, thereby capping the opening of the GroEL channel. In Prochlorococcus marinus (strain MIT 9215), this protein is Co-chaperonin GroES.